Consider the following 341-residue polypeptide: 33 kDa chaperonin (341 aa).

2 disulfides stabilise this stretch: Cys-245–Cys-247 and Cys-278–Cys-281.

This sequence belongs to the HSP33 family. Under oxidizing conditions two disulfide bonds are formed involving the reactive cysteines. Under reducing conditions zinc is bound to the reactive cysteines and the protein is inactive.

It localises to the cytoplasm. Its function is as follows. Redox regulated molecular chaperone. Protects both thermally unfolding and oxidatively damaged proteins from irreversible aggregation. Plays an important role in the bacterial defense system toward oxidative stress. The polypeptide is 33 kDa chaperonin (Thermus thermophilus (strain ATCC 27634 / DSM 579 / HB8)).